The following is a 496-amino-acid chain: MTRVTRDFRDSLQRDGVPAVSADVKFASSRFPNYRIGANDQIFDVKDDPKVMSMKEVVARETAQLMDQQKRLSVRDLAHKFEKGLAAAAKLSEEAKLKEATSLEKHVLLKKLRDALESLRGRVAGRNKDDVEEAIAMVEALAVQLTQREGELFIEKAEVKKLASFLKQASEDAKKLVDEERAFARAEIESARAAVQRVEEALREHEQMSRASGKQDMEDLMKEVQEARRIKMLHQPSRVMDMEYELRALRNQLAEKSKHFLQLQKKLAMCRKSEENISLVYEIDGTEALGSCLRVRPCSNDAPDLSKCTIQWYRSSSDGSKKELISGATKSVYAPEPFDVGRVLHADIIYDGHSLSLSTVGKIDPAAGLGSYVEALVRKHDVDFNVVVTQMSGEDHTSESIHLFHVGKMRIKLCKGKTVIAKEYYSSAMQLCGVRGGGNAAAQALYWQAKKGVSFVIAFESERERNAAIMLARRFACDCNVTLAGPEDRTETGQSP.

Positions 126–269 (RNKDDVEEAI…FLQLQKKLAM (144 aa)) form a coiled coil.

Belongs to the SCAB family. As to quaternary structure, dimer. Dimerization is required for actin-binding activity. In terms of tissue distribution, expressed in roots, stems, leaves, flowers, siliques and guard cells.

It localises to the cytoplasm. It is found in the cytoskeleton. Functionally, plant-specific actin binding protein that bundles and stabilizes microfilaments (MFs). Has no nucleation or capping activity. Regulates MF reorganization during stomatal closure. The binding to F-actin is insensitive to Ca(2+) and pH. Binds weakly to inositol phosphates. The sequence is that of Stomatal closure-related actin-binding protein 1 from Arabidopsis thaliana (Mouse-ear cress).